A 64-amino-acid polypeptide reads, in one-letter code: Large ribosomal subunit protein bL33 (64 aa).

Belongs to the bacterial ribosomal protein bL33 family.

This Picosynechococcus sp. (strain ATCC 27264 / PCC 7002 / PR-6) (Agmenellum quadruplicatum) protein is Large ribosomal subunit protein bL33.